The primary structure comprises 396 residues: Tryptophan synthase beta chain (396 aa).

Lysine 86 is modified (N6-(pyridoxal phosphate)lysine).

The protein belongs to the TrpB family. Tetramer of two alpha and two beta chains. Pyridoxal 5'-phosphate is required as a cofactor.

It catalyses the reaction (1S,2R)-1-C-(indol-3-yl)glycerol 3-phosphate + L-serine = D-glyceraldehyde 3-phosphate + L-tryptophan + H2O. Its pathway is amino-acid biosynthesis; L-tryptophan biosynthesis; L-tryptophan from chorismate: step 5/5. Its function is as follows. The beta subunit is responsible for the synthesis of L-tryptophan from indole and L-serine. The polypeptide is Tryptophan synthase beta chain (Francisella tularensis subsp. tularensis (strain FSC 198)).